Here is a 229-residue protein sequence, read N- to C-terminus: Large ribosomal subunit protein uL1 (229 aa).

This sequence belongs to the universal ribosomal protein uL1 family. In terms of assembly, part of the 50S ribosomal subunit.

Its function is as follows. Binds directly to 23S rRNA. The L1 stalk is quite mobile in the ribosome, and is involved in E site tRNA release. Protein L1 is also a translational repressor protein, it controls the translation of the L11 operon by binding to its mRNA. In Mannheimia succiniciproducens (strain KCTC 0769BP / MBEL55E), this protein is Large ribosomal subunit protein uL1.